Consider the following 540-residue polypeptide: Ribonuclease Y (540 aa).

A helical membrane pass occupies residues 4–24 (TILVPVAVAIVSVLVGGCAGY). A KH domain is found at 230 to 293 (TVSVVNLPND…EIAKRALERL (64 aa)). One can recognise an HD domain in the interval 356-449 (VLSHSIEVGK…VVAADTISSA (94 aa)).

It belongs to the RNase Y family.

The protein resides in the cell membrane. Endoribonuclease that initiates mRNA decay. The protein is Ribonuclease Y of Lactobacillus gasseri (strain ATCC 33323 / DSM 20243 / BCRC 14619 / CIP 102991 / JCM 1131 / KCTC 3163 / NCIMB 11718 / NCTC 13722 / AM63).